The sequence spans 674 residues: CRS2-associated factor 1, chloroplastic (674 aa).

The N-terminal 54 residues, 1 to 54 (MATARLPSRSFLSPAQQSYPRLPASVRLCLSHHEQPPTGPKRHRRAATSHPAFS), are a transit peptide targeting the chloroplast. Residues 31 to 61 (SHHEQPPTGPKRHRRAATSHPAFSAAARGRA) form a disordered region. A compositionally biased stretch (low complexity) spans 48–57 (TSHPAFSAAA). CRM domains are found at residues 183-279 (EPLT…TRPC) and 301-397 (GGLT…LPPL). The tract at residues 554–576 (GLLCLLEQAIHSGRALVLSEDEL) is CRS2 binding.

Interacts with CRS2 and RNA. Part of large ribonucleo-protein complexes that include group IIB introns, CRS2 and CAF1.

The protein resides in the plastid. Its subcellular location is the chloroplast stroma. In terms of biological role, required for the splicing of group IIB introns in chloroplasts. Forms splicing particles with CRS2. Interacts with RNA and confers intron specificity of the splicing particles. The chain is CRS2-associated factor 1, chloroplastic (CAF1) from Zea mays (Maize).